A 381-amino-acid polypeptide reads, in one-letter code: Alkanesulfonate monooxygenase (381 aa).

The protein belongs to the SsuD family. Homotetramer.

It carries out the reaction an alkanesulfonate + FMNH2 + O2 = an aldehyde + FMN + sulfite + H2O + 2 H(+). In terms of biological role, catalyzes the desulfonation of aliphatic sulfonates. The chain is Alkanesulfonate monooxygenase from Shigella flexneri.